Reading from the N-terminus, the 172-residue chain is uncharacterized protein (172 aa).

Residues 147–159 are compositionally biased toward gly residues; sequence AGSGSGSGSGSGS. Residues 147-172 are disordered; that stretch reads AGSGSGSGSGSGSDTGPFKKSQYKIL.

This is an uncharacterized protein from Homo sapiens (Human).